Consider the following 594-residue polypeptide: MEIINKFLDLEALLSPTVYEKLKNFDEEKLKRLIQKIREFKKYNNAFILLDEKFLDIFLQKDLDEIINEYKDFDFIFYYTGEEEKEKPKEVKKEIKKETEEKIEKEKIEFVKKEEKEQFIKKSDEDVEEKLKQLISKEEKKEDFDAERAKRYEHITKIKESVNSRIKWIAKDIDAVIEIYEDSDVSGKSTCTGTIEDFVKYFRDRFERLKVFIERKAQRKGYPLKDIKKMKGQKDIFVVGIVSDVDSTRNGNLIVRIEDTEDEATLILPKEKIEAGKIPDDILLDEVIGAIGTVSKSGSSIYVDEIIRPALPPKEPKRIDEEIYMAFLSDIHVGSKEFLHKEFEKFIRFLNGDVDNELEEKVVSRLKYICIAGDLVDGVGVYPGQEEDLYEVDIIEQYREIAMYLDQIPEHISIIISPGNHDAVRPAEPQPKLPEKITKLFNRDNIYFVGNPCTLNIHGFDTLLYHGRSFDDLVGQIRAASYENPVTIMKELIKRRLLCPTYGGRCPIAPEHKDYLVIDRDIDILHTGHIHINGYGIYRGVVMVNSGTFQEQTDFQKRMGISPTPAIVPIINMAKVGEKGHYLEWDRGVLEVRY.

This sequence belongs to the DNA polymerase delta/II small subunit family. In terms of assembly, heterodimer of a large subunit and a small subunit.

It catalyses the reaction DNA(n) + a 2'-deoxyribonucleoside 5'-triphosphate = DNA(n+1) + diphosphate. The catalysed reaction is Exonucleolytic cleavage in the 3'- to 5'-direction to yield nucleoside 5'-phosphates.. Possesses two activities: a DNA synthesis (polymerase) and an exonucleolytic activity that degrades single-stranded DNA in the 3' to 5' direction. Has a template-primer preference which is characteristic of a replicative DNA polymerase. This chain is DNA polymerase II small subunit (polB), found in Methanocaldococcus jannaschii (strain ATCC 43067 / DSM 2661 / JAL-1 / JCM 10045 / NBRC 100440) (Methanococcus jannaschii).